The following is a 105-amino-acid chain: MNKFYIYNNFKNEALINIKVKPYSKQNLINNFVIINNIPYIKLSITAAPEQGKANEGIINYLAKEWKLSRSSIEIIKGHTHSLKTILIKNINEDYLNLIINSYIK.

This sequence belongs to the UPF0235 family.

The polypeptide is UPF0235 protein RT0827 (Rickettsia typhi (strain ATCC VR-144 / Wilmington)).